Consider the following 226-residue polypeptide: Purine nucleoside phosphorylase Cj1217c (226 aa).

Zn(2+)-binding residues include His58, Cys93, and His109.

The protein belongs to the purine nucleoside phosphorylase YfiH/LACC1 family. As to quaternary structure, homodimer. It depends on Cu(2+) as a cofactor. Requires Zn(2+) as cofactor.

It catalyses the reaction adenosine + phosphate = alpha-D-ribose 1-phosphate + adenine. The enzyme catalyses S-methyl-5'-thioadenosine + phosphate = 5-(methylsulfanyl)-alpha-D-ribose 1-phosphate + adenine. The catalysed reaction is inosine + phosphate = alpha-D-ribose 1-phosphate + hypoxanthine. It carries out the reaction adenosine + H2O + H(+) = inosine + NH4(+). Functionally, purine nucleoside enzyme that catalyzes the phosphorolysis of adenosine and inosine nucleosides, yielding D-ribose 1-phosphate and the respective free bases, adenine and hypoxanthine. Also catalyzes the phosphorolysis of S-methyl-5'-thioadenosine into adenine and S-methyl-5-thio-alpha-D-ribose 1-phosphate. Also has adenosine deaminase activity. This is Purine nucleoside phosphorylase Cj1217c from Campylobacter jejuni subsp. jejuni serotype O:2 (strain ATCC 700819 / NCTC 11168).